The sequence spans 512 residues: Maturase K (512 aa).

The protein belongs to the intron maturase 2 family. MatK subfamily.

It localises to the plastid. It is found in the chloroplast. Usually encoded in the trnK tRNA gene intron. Probably assists in splicing its own and other chloroplast group II introns. The chain is Maturase K from Oenothera biennis (German evening primrose).